The chain runs to 261 residues: Triosephosphate isomerase (261 aa).

Position 10-12 (10-12 (NWK)) interacts with substrate. The Electrophile role is filled by histidine 100. Glutamate 172 serves as the catalytic Proton acceptor. Residues glycine 178, serine 218, and 239–240 (GG) contribute to the substrate site.

This sequence belongs to the triosephosphate isomerase family. As to quaternary structure, homodimer.

It localises to the cytoplasm. The catalysed reaction is D-glyceraldehyde 3-phosphate = dihydroxyacetone phosphate. It functions in the pathway carbohydrate biosynthesis; gluconeogenesis. The protein operates within carbohydrate degradation; glycolysis; D-glyceraldehyde 3-phosphate from glycerone phosphate: step 1/1. In terms of biological role, involved in the gluconeogenesis. Catalyzes stereospecifically the conversion of dihydroxyacetone phosphate (DHAP) to D-glyceraldehyde-3-phosphate (G3P). The chain is Triosephosphate isomerase from Mycobacterium sp. (strain JLS).